A 171-amino-acid polypeptide reads, in one-letter code: Co-chaperone protein HscB homolog (171 aa).

Positions 2 to 74 (NHFELFGLPN…VTRAEYILSE (73 aa)) constitute a J domain.

It belongs to the HscB family. Interacts with HscA and stimulates its ATPase activity.

In terms of biological role, co-chaperone involved in the maturation of iron-sulfur cluster-containing proteins. Seems to help targeting proteins to be folded toward HscA. The sequence is that of Co-chaperone protein HscB homolog from Aliivibrio salmonicida (strain LFI1238) (Vibrio salmonicida (strain LFI1238)).